Consider the following 230-residue polypeptide: Large ribosomal subunit protein uL1 (230 aa).

The protein belongs to the universal ribosomal protein uL1 family. Part of the 50S ribosomal subunit.

Its function is as follows. Binds directly to 23S rRNA. The L1 stalk is quite mobile in the ribosome, and is involved in E site tRNA release. In terms of biological role, protein L1 is also a translational repressor protein, it controls the translation of the L11 operon by binding to its mRNA. The polypeptide is Large ribosomal subunit protein uL1 (Granulibacter bethesdensis (strain ATCC BAA-1260 / CGDNIH1)).